Here is a 273-residue protein sequence, read N- to C-terminus: Tryptophan synthase alpha chain (273 aa).

Active-site proton acceptor residues include Glu-49 and Asp-60.

It belongs to the TrpA family. In terms of assembly, tetramer of two alpha and two beta chains.

It carries out the reaction (1S,2R)-1-C-(indol-3-yl)glycerol 3-phosphate + L-serine = D-glyceraldehyde 3-phosphate + L-tryptophan + H2O. Its pathway is amino-acid biosynthesis; L-tryptophan biosynthesis; L-tryptophan from chorismate: step 5/5. Functionally, the alpha subunit is responsible for the aldol cleavage of indoleglycerol phosphate to indole and glyceraldehyde 3-phosphate. This Albidiferax ferrireducens (strain ATCC BAA-621 / DSM 15236 / T118) (Rhodoferax ferrireducens) protein is Tryptophan synthase alpha chain.